The chain runs to 422 residues: MTRRVAVTGIGVVAPGGIGVPAFWDLLSSGRTATRGITLFDPEGLRSRIAAECDFDPLAHGLDPELVERADRYIQFALVAADEAVTDSGIDFGTENPWRVAVSLGSAVGGTTRLEHDYVLVSERGQRWDVDHRAAEPELHRAFSPSTLAADVAERFGAQGPVQTVSTGCTSGLDAVGYAFHTIEEGRADVCIAGASDSPISPITMACFDAIKATSPNNDDPEHASRPFDAHRDGFVMGEGAAVLVLEELEHARARGAHVYCEIGGYATFGNAYHMTGLTSEGLEMARAIDVALDHARVDPTDIDYVNAHGSGTRQNDRHETAAVKKSLGAHAYDTPMSSIKSMVGHSLGAIGAIEVVACVLALARQVVPPTANYETPDPECDLDYVPRTARPRRLDHVLSVGSGFGGFQSAVLLTGPAGRKR.

The Ketosynthase family 3 (KS3) domain occupies 2–416 (TRRVAVTGIG…GFQSAVLLTG (415 aa)). Active-site for beta-ketoacyl synthase activity residues include Cys169, His309, and His346.

It belongs to the thiolase-like superfamily. Beta-ketoacyl-ACP synthases family.

It functions in the pathway antibiotic biosynthesis; curamycin biosynthesis. This Streptomyces cyaneus (Streptomyces curacoi) protein is Putative polyketide beta-ketoacyl synthase 1 (curA).